A 123-amino-acid polypeptide reads, in one-letter code: Large ribosomal subunit protein uL14 (123 aa).

The protein belongs to the universal ribosomal protein uL14 family. As to quaternary structure, part of the 50S ribosomal subunit. Forms a cluster with proteins L3 and L19. In the 70S ribosome, L14 and L19 interact and together make contacts with the 16S rRNA in bridges B5 and B8.

Its function is as follows. Binds to 23S rRNA. Forms part of two intersubunit bridges in the 70S ribosome. The polypeptide is Large ribosomal subunit protein uL14 (Vibrio parahaemolyticus serotype O3:K6 (strain RIMD 2210633)).